Reading from the N-terminus, the 713-residue chain is Constitutive lysine decarboxylase (713 aa).

The residue at position 367 (Lys-367) is an N6-(pyridoxal phosphate)lysine.

It belongs to the Orn/Lys/Arg decarboxylase class-I family. In terms of assembly, homodecamer; built of five dimers associated in a 5-fold symmetrical double-ring. The cofactor is pyridoxal 5'-phosphate.

The enzyme catalyses L-lysine + H(+) = cadaverine + CO2. Functionally, plays a role in lysine utilization by acting as a lysine decarboxylase. The polypeptide is Constitutive lysine decarboxylase (ldcC) (Escherichia coli (strain K12)).